Consider the following 431-residue polypeptide: Ribosomal protein uS12 methylthiotransferase RimO (431 aa).

Residues 4-120 enclose the MTTase N-terminal domain; it reads LKLYVIVLGC…LAESINKTKK (117 aa). 6 residues coordinate [4Fe-4S] cluster: C13, C49, C83, C150, C154, and C157. The Radical SAM core domain maps to 136–365; sequence DSDLPYAYVK…MEVQAEISFL (230 aa). The 64-residue stretch at 368–431 folds into the TRAM domain; that stretch reads QRLVGKVIDV…TYDLEGELVE (64 aa).

The protein belongs to the methylthiotransferase family. RimO subfamily. [4Fe-4S] cluster is required as a cofactor.

Its subcellular location is the cytoplasm. The catalysed reaction is L-aspartate(89)-[ribosomal protein uS12]-hydrogen + (sulfur carrier)-SH + AH2 + 2 S-adenosyl-L-methionine = 3-methylsulfanyl-L-aspartate(89)-[ribosomal protein uS12]-hydrogen + (sulfur carrier)-H + 5'-deoxyadenosine + L-methionine + A + S-adenosyl-L-homocysteine + 2 H(+). Its function is as follows. Catalyzes the methylthiolation of an aspartic acid residue of ribosomal protein uS12. This chain is Ribosomal protein uS12 methylthiotransferase RimO, found in Fervidobacterium nodosum (strain ATCC 35602 / DSM 5306 / Rt17-B1).